The chain runs to 71 residues: Antimicrobial peptide VpCT4 (71 aa).

An N-terminal signal peptide occupies residues 1-23 (MKTQFVILIVAIVILQLISQSEA). Leucine 39 is subject to Leucine amide. Positions 40–71 (GKRGVQNMDQFDDIFEPELSEADLRYLQDLLR) are excised as a propeptide.

This sequence belongs to the non-disulfide-bridged peptide (NDBP) superfamily. Short antimicrobial peptide (group 4) family. Expressed by the venom gland.

It is found in the secreted. The protein resides in the target cell membrane. Antimicrobial peptide with potent activity against bacteria S.aureus (MIC=9.3 uM), weak activity against E.coli (MIC&gt;100 uM), and weak activity against pathogenic yeasts C.albicans (MIC=100 uM) and C.glabrata (MIC=100 uM). Is not very effective against P.aeruginosa (MIC&gt;300 uM). Also provokes high hemolysis on human erythrocytes (HC(50)=4.8 uM). The polypeptide is Antimicrobial peptide VpCT4 (Mesomexovis punctatus (Scorpion)).